Here is a 55-residue protein sequence, read N- to C-terminus: UPF0434 protein BARBAKC583_1098 (55 aa).

The protein belongs to the UPF0434 family.

This chain is UPF0434 protein BARBAKC583_1098, found in Bartonella bacilliformis (strain ATCC 35685 / KC583 / Herrer 020/F12,63).